The following is a 401-amino-acid chain: Dihydrolipoyllysine-residue succinyltransferase component of 2-oxoglutarate dehydrogenase complex (401 aa).

Residues 2–77 (SVKIIVPSLG…AVGEEIGEIN (76 aa)) form the Lipoyl-binding domain. An N6-lipoyllysine modification is found at Lys43. One can recognise a Peripheral subunit-binding (PSBD) domain in the interval 115–152 (ILAPSVQKLVTENKLDPNNIKGTGRDGRITKGDVLETI). Residues His372 and Asp376 contribute to the active site.

It belongs to the 2-oxoacid dehydrogenase family. Forms a 24-polypeptide structural core with octahedral symmetry. Part of the 2-oxoglutarate dehydrogenase (OGDH) complex composed of E1 (2-oxoglutarate dehydrogenase), E2 (dihydrolipoamide succinyltransferase) and E3 (dihydrolipoamide dehydrogenase); the complex contains multiple copies of the three enzymatic components (E1, E2 and E3). It depends on (R)-lipoate as a cofactor.

The catalysed reaction is N(6)-[(R)-dihydrolipoyl]-L-lysyl-[protein] + succinyl-CoA = N(6)-[(R)-S(8)-succinyldihydrolipoyl]-L-lysyl-[protein] + CoA. It participates in amino-acid degradation; L-lysine degradation via saccharopine pathway; glutaryl-CoA from L-lysine: step 6/6. Its function is as follows. E2 component of the 2-oxoglutarate dehydrogenase (OGDH) complex which catalyzes the second step in the conversion of 2-oxoglutarate to succinyl-CoA and CO(2). In Rickettsia felis (strain ATCC VR-1525 / URRWXCal2) (Rickettsia azadi), this protein is Dihydrolipoyllysine-residue succinyltransferase component of 2-oxoglutarate dehydrogenase complex (sucB).